The sequence spans 278 residues: Tryptophan 2,3-dioxygenase (278 aa).

Residues 47-51 (FIVQH), Y109, and R113 each bind substrate. H236 provides a ligand contact to heme. A substrate-binding site is contributed by T250.

Belongs to the tryptophan 2,3-dioxygenase family. As to quaternary structure, homotetramer. The cofactor is heme.

The enzyme catalyses L-tryptophan + O2 = N-formyl-L-kynurenine. It participates in amino-acid degradation; L-tryptophan degradation via kynurenine pathway; L-kynurenine from L-tryptophan: step 1/2. Heme-dependent dioxygenase that catalyzes the oxidative cleavage of the L-tryptophan (L-Trp) pyrrole ring and converts L-tryptophan to N-formyl-L-kynurenine. Catalyzes the oxidative cleavage of the indole moiety. The chain is Tryptophan 2,3-dioxygenase from Ralstonia pickettii (strain 12J).